The chain runs to 218 residues: Small ribosomal subunit protein uS3c (218 aa).

The 72-residue stretch at Val-47–Leu-118 folds into the KH type-2 domain.

This sequence belongs to the universal ribosomal protein uS3 family. In terms of assembly, part of the 30S ribosomal subunit.

It localises to the plastid. The protein resides in the chloroplast. This Angiopteris evecta (Mule's foot fern) protein is Small ribosomal subunit protein uS3c (rps3).